The following is a 593-amino-acid chain: Aspartate--tRNA(Asp/Asn) ligase (593 aa).

E173 is a binding site for L-aspartate. An aspartate region spans residues Q197–K200. R219 provides a ligand contact to L-aspartate. Residues R219–E221 and Q228 contribute to the ATP site. Residue H451 participates in L-aspartate binding. Residue E485 participates in ATP binding. Position 492 (R492) interacts with L-aspartate. An ATP-binding site is contributed by G537 to R540.

It belongs to the class-II aminoacyl-tRNA synthetase family. Type 1 subfamily. As to quaternary structure, homodimer.

It localises to the cytoplasm. The catalysed reaction is tRNA(Asx) + L-aspartate + ATP = L-aspartyl-tRNA(Asx) + AMP + diphosphate. Aspartyl-tRNA synthetase with relaxed tRNA specificity since it is able to aspartylate not only its cognate tRNA(Asp) but also tRNA(Asn). Reaction proceeds in two steps: L-aspartate is first activated by ATP to form Asp-AMP and then transferred to the acceptor end of tRNA(Asp/Asn). The chain is Aspartate--tRNA(Asp/Asn) ligase from Legionella pneumophila (strain Corby).